Consider the following 160-residue polypeptide: Transcription elongation factor GreA (160 aa).

It belongs to the GreA/GreB family.

In terms of biological role, necessary for efficient RNA polymerase transcription elongation past template-encoded arresting sites. The arresting sites in DNA have the property of trapping a certain fraction of elongating RNA polymerases that pass through, resulting in locked ternary complexes. Cleavage of the nascent transcript by cleavage factors such as GreA or GreB allows the resumption of elongation from the new 3'terminus. GreA releases sequences of 2 to 3 nucleotides. This Francisella philomiragia subsp. philomiragia (strain ATCC 25017 / CCUG 19701 / FSC 153 / O#319-036) protein is Transcription elongation factor GreA.